The sequence spans 362 residues: Cyclic di-GMP phosphodiesterase PdeL (362 aa).

In terms of domain architecture, HTH luxR-type spans 18–83; the sequence is HLSLPGSVSE…TFWRDIFFQY (66 aa). The H-T-H motif DNA-binding region spans 42–61; it reads VTEISQYRNRSAKTISHQKK. The region spanning 106 to 360 is the EAL domain; that stretch reads HIVTPEAISL…KFISEWVMKA (255 aa). Residue Gln-127 participates in substrate binding. Glu-141 is a Mg(2+) binding site. Substrate-binding positions include 144–145 and Asn-200; that span reads VR. Positions 200, 232, and 262 each coordinate Mg(2+). Substrate is bound by residues Asp-262, Lys-286, 319–322, and Tyr-341; that span reads EGVE.

In terms of assembly, is in a fast thermodynamic monomer-homodimer equilibrium. Dimerization is required for PDE activity. Dimerization affinity is increased about 100-fold upon substrate binding. The cofactor is Mg(2+). Mn(2+) is required as a cofactor.

It catalyses the reaction 3',3'-c-di-GMP + H2O = 5'-phosphoguanylyl(3'-&gt;5')guanosine + H(+). Strongly inhibited by Ca(2+). Functionally, acts both as an enzyme and as a c-di-GMP sensor to couple transcriptional activity to the c-di-GMP status of the cell. Phosphodiesterase (PDE) that catalyzes the hydrolysis of cyclic-di-GMP (c-di-GMP) to 5'-pGpG. Also acts as a transcription factor to control its own expression. This Escherichia coli (strain K12) protein is Cyclic di-GMP phosphodiesterase PdeL.